Here is a 597-residue protein sequence, read N- to C-terminus: Elongation factor 4 (597 aa).

In terms of domain architecture, tr-type G spans 2-184 (KNIRNFSIIA…EIVAKIPAPT (183 aa)). Residues 14–19 (DHGKST) and 131–134 (NKID) contribute to the GTP site.

It belongs to the TRAFAC class translation factor GTPase superfamily. Classic translation factor GTPase family. LepA subfamily.

Its subcellular location is the cell inner membrane. It carries out the reaction GTP + H2O = GDP + phosphate + H(+). Required for accurate and efficient protein synthesis under certain stress conditions. May act as a fidelity factor of the translation reaction, by catalyzing a one-codon backward translocation of tRNAs on improperly translocated ribosomes. Back-translocation proceeds from a post-translocation (POST) complex to a pre-translocation (PRE) complex, thus giving elongation factor G a second chance to translocate the tRNAs correctly. Binds to ribosomes in a GTP-dependent manner. The chain is Elongation factor 4 from Neisseria meningitidis serogroup C / serotype 2a (strain ATCC 700532 / DSM 15464 / FAM18).